A 166-amino-acid polypeptide reads, in one-letter code: Phospholipase A2 inhibitor A1 (166 aa).

A signal peptide spans 1–19 (MRLILLSGLLLLGIFLANG). In terms of domain architecture, C-type lectin spans 46-161 (LKGSFLIVHK…CDDNLLVVCE (116 aa)). 2 disulfides stabilise this stretch: Cys-83/Cys-160 and Cys-138/Cys-152. N-linked (GlcNAc...) asparagine glycosylation occurs at Asn-122.

Belongs to the alpha-type phospholipase A2 inhibitor family. In terms of assembly, homotrimer; non-covalently linked. Expressed by the liver.

Its subcellular location is the secreted. This phospholipase A2 inhibitor binds directly phospholipase A2 in the presence or absence of calcium. The chain is Phospholipase A2 inhibitor A1 from Bothrops neuwiedi (Neuwied's lancehead).